The chain runs to 110 residues: UPF0060 membrane protein MMAR_2961 (110 aa).

The next 4 membrane-spanning stretches (helical) occupy residues 6–26, 32–52, 61–81, and 90–110; these read ILLF…VWQG, GLAW…VATL, ILAA…MAFD, and IVGA…PRAH.

Belongs to the UPF0060 family.

The protein resides in the cell membrane. This chain is UPF0060 membrane protein MMAR_2961, found in Mycobacterium marinum (strain ATCC BAA-535 / M).